A 198-amino-acid polypeptide reads, in one-letter code: Protein GrpE (198 aa).

The tract at residues Met-1–Glu-58 is disordered. 2 stretches are compositionally biased toward basic and acidic residues: residues Lys-16–Ser-35 and Val-46–Glu-58.

This sequence belongs to the GrpE family. As to quaternary structure, homodimer.

The protein localises to the cytoplasm. Participates actively in the response to hyperosmotic and heat shock by preventing the aggregation of stress-denatured proteins, in association with DnaK and GrpE. It is the nucleotide exchange factor for DnaK and may function as a thermosensor. Unfolded proteins bind initially to DnaJ; upon interaction with the DnaJ-bound protein, DnaK hydrolyzes its bound ATP, resulting in the formation of a stable complex. GrpE releases ADP from DnaK; ATP binding to DnaK triggers the release of the substrate protein, thus completing the reaction cycle. Several rounds of ATP-dependent interactions between DnaJ, DnaK and GrpE are required for fully efficient folding. This Staphylococcus carnosus (strain TM300) protein is Protein GrpE.